Here is a 319-residue protein sequence, read N- to C-terminus: Acetyl-coenzyme A carboxylase carboxyl transferase subunit alpha (319 aa).

One can recognise a CoA carboxyltransferase C-terminal domain in the interval 39–293 (RLQKKSNDLT…KAVLEKQLHE (255 aa)).

This sequence belongs to the AccA family. As to quaternary structure, acetyl-CoA carboxylase is a heterohexamer composed of biotin carboxyl carrier protein (AccB), biotin carboxylase (AccC) and two subunits each of ACCase subunit alpha (AccA) and ACCase subunit beta (AccD).

Its subcellular location is the cytoplasm. The catalysed reaction is N(6)-carboxybiotinyl-L-lysyl-[protein] + acetyl-CoA = N(6)-biotinyl-L-lysyl-[protein] + malonyl-CoA. Its pathway is lipid metabolism; malonyl-CoA biosynthesis; malonyl-CoA from acetyl-CoA: step 1/1. In terms of biological role, component of the acetyl coenzyme A carboxylase (ACC) complex. First, biotin carboxylase catalyzes the carboxylation of biotin on its carrier protein (BCCP) and then the CO(2) group is transferred by the carboxyltransferase to acetyl-CoA to form malonyl-CoA. This chain is Acetyl-coenzyme A carboxylase carboxyl transferase subunit alpha, found in Neisseria meningitidis serogroup B (strain ATCC BAA-335 / MC58).